Here is a 479-residue protein sequence, read N- to C-terminus: GTPase Obg (479 aa).

The 158-residue stretch at Pro2–Val159 folds into the Obg domain. The OBG-type G domain maps to Ala160–Ser340. GTP-binding positions include Gly166–Ser173, Phe191–Val195, Asp212–Gly215, Asn292–Asp295, and Ser321–Val323. Mg(2+) is bound by residues Ser173 and Thr193. One can recognise an OCT domain in the interval Pro358–Pro436. Positions Thr438–Asp479 are disordered. Residues Thr451 to Lys467 are compositionally biased toward basic and acidic residues.

This sequence belongs to the TRAFAC class OBG-HflX-like GTPase superfamily. OBG GTPase family. As to quaternary structure, monomer. Requires Mg(2+) as cofactor.

Its subcellular location is the cytoplasm. Its function is as follows. An essential GTPase which binds GTP, GDP and possibly (p)ppGpp with moderate affinity, with high nucleotide exchange rates and a fairly low GTP hydrolysis rate. Plays a role in control of the cell cycle, stress response, ribosome biogenesis and in those bacteria that undergo differentiation, in morphogenesis control. In Mycobacterium marinum (strain ATCC BAA-535 / M), this protein is GTPase Obg.